Here is a 93-residue protein sequence, read N- to C-terminus: uncharacterized protein (93 aa).

This is an uncharacterized protein from Rickettsia conorii (strain ATCC VR-613 / Malish 7).